The primary structure comprises 91 residues: Large ribosomal subunit protein bL27 (91 aa).

The protein belongs to the bacterial ribosomal protein bL27 family. As to quaternary structure, part of the 50S ribosomal subunit. Contacts protein L18.

Its function is as follows. Binds the 5S and 23S rRNAs and also the tRNA in the P site. The polypeptide is Large ribosomal subunit protein bL27 (rpmA) (Deinococcus radiodurans (strain ATCC 13939 / DSM 20539 / JCM 16871 / CCUG 27074 / LMG 4051 / NBRC 15346 / NCIMB 9279 / VKM B-1422 / R1)).